Consider the following 459-residue polypeptide: Pentatricopeptide repeat-containing protein At5g18390, mitochondrial (459 aa).

The N-terminal 7 residues, 1 to 7 (MLLLRRY), are a transit peptide targeting the mitochondrion. 9 PPR repeats span residues 110-144 (TSME…SLDI), 145-175 (SGET…VPKT), 181-215 (TVDV…GLKP), 216-250 (DKRT…GFNP), 251-285 (PARG…GFVP), 286-320 (DIQT…GLCV), 321-355 (DIDT…GHKP), 356-390 (FPSL…AHPP), and 391-425 (NRPV…GLVP).

This sequence belongs to the PPR family. P subfamily.

The protein localises to the mitochondrion. This is Pentatricopeptide repeat-containing protein At5g18390, mitochondrial from Arabidopsis thaliana (Mouse-ear cress).